The following is a 195-amino-acid chain: Transcriptional regulator LdrP (195 aa).

The HTH crp-type domain maps to 110–182 (GELRARIARY…YRRVYLLDLA (73 aa)). Residues 142 to 161 (HEEIADATASIRESVSKVLA) constitute a DNA-binding region (H-T-H motif).

Its function is as follows. Activates transcription. Positively regulates PcrtB promoter upstream of the crtB operon in a cAMP-independent manner. Regulated genes include genes encoding DNA photolyase, phytoene synthase and cytochrome P450 monooxygenase, which are involved in carotenoid biosynthesis. Positively regulates the light-inducible gene cluster in the megaplasmid in a cAMP-independent manner. The sequence is that of Transcriptional regulator LdrP from Thermus thermophilus (strain ATCC BAA-163 / DSM 7039 / HB27).